The chain runs to 133 residues: Norrin (133 aa).

A signal peptide spans M1–S24. Intrachain disulfides connect C39–C96, C55–C110, C65–C126, and C69–C128. In terms of domain architecture, CTCK spans C39–N132.

In terms of assembly, homodimer; disulfide-linked. Component of a complex, at least composed of TSPAN12, FZD4, LRP5/6 and norrin (NDP). Binds FZD4 with high affinity. Interacts with LRP6 (via Beta-propellers 1 and 2). In terms of tissue distribution, expressed in the outer nuclear, inner nuclear and ganglion cell layers of the retina, and in fetal and adult brain.

The protein resides in the secreted. In terms of biological role, activates the canonical Wnt signaling pathway through FZD4 and LRP5 coreceptor. Plays a central role in retinal vascularization by acting as a ligand for FZD4 that signals via stabilizing beta-catenin (CTNNB1) and activating LEF/TCF-mediated transcriptional programs. Acts in concert with TSPAN12 to activate FZD4 independently of the Wnt-dependent activation of FZD4, suggesting the existence of a Wnt-independent signaling that also promote accumulation the beta-catenin (CTNNB1). May be involved in a pathway that regulates neural cell differentiation and proliferation. Possible role in neuroectodermal cell-cell interaction. The polypeptide is Norrin (NDP) (Homo sapiens (Human)).